The following is a 175-amino-acid chain: uncharacterized protein (175 aa).

2 helical membrane-spanning segments follow: residues 21 to 41 and 50 to 70; these read IVLD…MGPI and LVGL…VFVI.

It localises to the membrane. This is an uncharacterized protein from Saccharomyces cerevisiae (strain ATCC 204508 / S288c) (Baker's yeast).